We begin with the raw amino-acid sequence, 333 residues long: N-acetyl-gamma-glutamyl-phosphate reductase (333 aa).

Residue Cys136 is part of the active site.

Belongs to the NAGSA dehydrogenase family. Type 1 subfamily.

The protein localises to the cytoplasm. The enzyme catalyses N-acetyl-L-glutamate 5-semialdehyde + phosphate + NADP(+) = N-acetyl-L-glutamyl 5-phosphate + NADPH + H(+). The protein operates within amino-acid biosynthesis; L-arginine biosynthesis; N(2)-acetyl-L-ornithine from L-glutamate: step 3/4. Its function is as follows. Catalyzes the NADPH-dependent reduction of N-acetyl-5-glutamyl phosphate to yield N-acetyl-L-glutamate 5-semialdehyde. This is N-acetyl-gamma-glutamyl-phosphate reductase from Xylella fastidiosa (strain 9a5c).